A 57-amino-acid chain; its full sequence is UPF0391 membrane protein XC_2938 (57 aa).

A run of 2 helical transmembrane segments spans residues 4-24 (WAII…GGMA) and 33-53 (FLFW…MTIA).

It belongs to the UPF0391 family.

The protein resides in the cell membrane. The sequence is that of UPF0391 membrane protein XC_2938 from Xanthomonas campestris pv. campestris (strain 8004).